Here is a 249-residue protein sequence, read N- to C-terminus: Ribosomal RNA small subunit methyltransferase J (249 aa).

S-adenosyl-L-methionine contacts are provided by residues 101–102 (RD), 117–118 (ER), 153–154 (SS), and Asp171.

It belongs to the methyltransferase superfamily. RsmJ family.

The protein localises to the cytoplasm. The enzyme catalyses guanosine(1516) in 16S rRNA + S-adenosyl-L-methionine = N(2)-methylguanosine(1516) in 16S rRNA + S-adenosyl-L-homocysteine + H(+). Specifically methylates the guanosine in position 1516 of 16S rRNA. This Salmonella arizonae (strain ATCC BAA-731 / CDC346-86 / RSK2980) protein is Ribosomal RNA small subunit methyltransferase J.